The chain runs to 387 residues: GTPase Obg (387 aa).

The Obg domain occupies 1–159 (MKFVDEVEIR…RSLKLELLLL (159 aa)). Positions 160–333 (ADVGLLGLPN…LTQKVMTFIE (174 aa)) constitute an OBG-type G domain. Residues 166–173 (GLPNAGKS), 191–195 (FTTLV), 213–216 (DIPG), 283–286 (NKLD), and 314–316 (SAF) each bind GTP. Mg(2+)-binding residues include S173 and T193. Residues 361–387 (AAHSQDDDLDDDDWDEDDYDVEVEYRQ) are disordered. Residues 367 to 387 (DDLDDDDWDEDDYDVEVEYRQ) are compositionally biased toward acidic residues.

Belongs to the TRAFAC class OBG-HflX-like GTPase superfamily. OBG GTPase family. Monomer. Requires Mg(2+) as cofactor.

The protein localises to the cytoplasm. In terms of biological role, an essential GTPase which binds GTP, GDP and possibly (p)ppGpp with moderate affinity, with high nucleotide exchange rates and a fairly low GTP hydrolysis rate. Plays a role in control of the cell cycle, stress response, ribosome biogenesis and in those bacteria that undergo differentiation, in morphogenesis control. This Colwellia psychrerythraea (strain 34H / ATCC BAA-681) (Vibrio psychroerythus) protein is GTPase Obg.